A 205-amino-acid polypeptide reads, in one-letter code: High frequency lysogenization protein HflD homolog (205 aa).

Belongs to the HflD family.

The protein localises to the cytoplasm. Its subcellular location is the cell inner membrane. This Shewanella sp. (strain MR-4) protein is High frequency lysogenization protein HflD homolog.